Consider the following 276-residue polypeptide: Golgi apparatus membrane protein TVP23 homolog C (276 aa).

Position 1 is an N-acetylmethionine (M1). The tract at residues 1–21 (MLQQDSNDDTEDVSLFDAEEE) is disordered. The next 2 membrane-spanning stretches (helical) occupy residues 52-72 (LLCELLSSSFITCMVTIILLL) and 126-146 (IFWLGLIACSVLWVIFAFSAL). The disordered stretch occupies residues 254–276 (GESPNSRGTGEPGPKFHLASGMH).

It belongs to the TVP23 family.

It localises to the membrane. The protein is Golgi apparatus membrane protein TVP23 homolog C (TVP23C) of Homo sapiens (Human).